Reading from the N-terminus, the 636-residue chain is 1-deoxy-D-xylulose-5-phosphate synthase (636 aa).

Residues His-74 and 115 to 117 each bind thiamine diphosphate; that span reads GHS. Asp-146 is a binding site for Mg(2+). Residues 147–148, Asn-175, Tyr-286, and Glu-367 contribute to the thiamine diphosphate site; that span reads GA. Asn-175 provides a ligand contact to Mg(2+).

The protein belongs to the transketolase family. DXPS subfamily. As to quaternary structure, homodimer. Requires Mg(2+) as cofactor. It depends on thiamine diphosphate as a cofactor.

It carries out the reaction D-glyceraldehyde 3-phosphate + pyruvate + H(+) = 1-deoxy-D-xylulose 5-phosphate + CO2. It participates in metabolic intermediate biosynthesis; 1-deoxy-D-xylulose 5-phosphate biosynthesis; 1-deoxy-D-xylulose 5-phosphate from D-glyceraldehyde 3-phosphate and pyruvate: step 1/1. Functionally, catalyzes the acyloin condensation reaction between C atoms 2 and 3 of pyruvate and glyceraldehyde 3-phosphate to yield 1-deoxy-D-xylulose-5-phosphate (DXP). This chain is 1-deoxy-D-xylulose-5-phosphate synthase, found in Halothermothrix orenii (strain H 168 / OCM 544 / DSM 9562).